Consider the following 169-residue polypeptide: UPF0303 protein BCAN_A1444 (169 aa).

This sequence belongs to the UPF0303 family.

The polypeptide is UPF0303 protein BCAN_A1444 (Brucella canis (strain ATCC 23365 / NCTC 10854 / RM-666)).